A 388-amino-acid chain; its full sequence is Staphopain A (388 aa).

The signal sequence occupies residues 1–25; the sequence is MKRNFPKLIALSLIFSLSITPIANA. Positions 26–214 are excised as a propeptide; the sequence is ESNSNIKAKD…TSQFKSNNYT (189 aa). Active-site residues include C238, H334, and N355.

This sequence belongs to the peptidase C47 family. In terms of assembly, in the cytoplasm, prematurely activated/folded ScpA forms a stable non-covalent complex with ScpB. Cleavage leads to the activation of ScpA probably by an auto-catalytic manner.

The protein resides in the secreted. The enzyme catalyses Broad endopeptidase action on proteins including elastin, but rather limited hydrolysis of small-molecule substrates. Assays are conveniently made with hemoglobin, casein or Z-Phe-Arg-NHMec as substrate.. Its activity is regulated as follows. Prematurely activated/folded staphopain A is inhibited by staphostatin A (ScpB), which is probably required to protect staphylococcal cytoplasmic proteins from degradation by ScpA. Also inactivated by heavy metal ions such as Hg(2+) or Ag(+), iodoacetamide, E-64 and human plasma. Cysteine protease that plays an important role in the inhibition of host innate immune response. Cleaves host elastins found in connective tissues, pulmonary surfactant protein A in the lungs, and the chemokine receptor CXCR2 on leukocytes. Proteolytic cleavage of surfactant protein A impairs bacterial phagocytosis by neutrophils while CXCR2 degradation blocks neutrophil activation and chemotaxis. Additionally, promotes vascular leakage by activating the plasma kallikerin/kinin system, resulting in hypotension. The chain is Staphopain A (sspP) from Staphylococcus aureus.